The following is a 637-amino-acid chain: 1-deoxy-D-xylulose-5-phosphate synthase (637 aa).

Thiamine diphosphate contacts are provided by residues histidine 75 and 116-118 (AHS). Residue aspartate 147 participates in Mg(2+) binding. Thiamine diphosphate contacts are provided by residues 148 to 149 (GA), asparagine 177, tyrosine 288, and glutamate 370. Asparagine 177 serves as a coordination point for Mg(2+).

This sequence belongs to the transketolase family. DXPS subfamily. Homodimer. Requires Mg(2+) as cofactor. Thiamine diphosphate serves as cofactor.

The catalysed reaction is D-glyceraldehyde 3-phosphate + pyruvate + H(+) = 1-deoxy-D-xylulose 5-phosphate + CO2. Its pathway is metabolic intermediate biosynthesis; 1-deoxy-D-xylulose 5-phosphate biosynthesis; 1-deoxy-D-xylulose 5-phosphate from D-glyceraldehyde 3-phosphate and pyruvate: step 1/1. Its function is as follows. Catalyzes the acyloin condensation reaction between C atoms 2 and 3 of pyruvate and glyceraldehyde 3-phosphate to yield 1-deoxy-D-xylulose-5-phosphate (DXP). The chain is 1-deoxy-D-xylulose-5-phosphate synthase from Cupriavidus metallidurans (strain ATCC 43123 / DSM 2839 / NBRC 102507 / CH34) (Ralstonia metallidurans).